We begin with the raw amino-acid sequence, 1274 residues long: DENN domain-containing protein 5B (1274 aa).

The residue at position 2 (S2) is an N-acetylserine. The uDENN domain maps to 39–244 (DELAGENFDQ…EVPLPPPGRS (206 aa)). Residues S49 and S178 each carry the phosphoserine modification. The cDENN domain occupies 263–399 (ELPLSDYPLR…VDFIQELSEV (137 aa)). The 181-residue stretch at 401–581 (LQFGIPPEGS…DNKIMSQWEE (181 aa)) folds into the dDENN domain. Residues 772–932 (LEENTLIASL…DYFCFTSVFT (161 aa)) enclose the RUN 1 domain. S822 bears the Phosphoserine mark. A helical membrane pass occupies residues 916–936 (LLSLNAVDYFCFTSVFTTIMI). Residues 936 to 1044 (IPYRSVIIPI…DDGSLERILI (109 aa)) enclose the PLAT domain. Phosphothreonine is present on T1062. Residues S1068, S1076, and S1079 each carry the phosphoserine modification. The 150-residue stretch at 1118–1267 (TVLLCGENGL…QDFTIVLEGS (150 aa)) folds into the RUN 2 domain.

It belongs to the RAB6IP1 family.

It is found in the membrane. In terms of biological role, guanine nucleotide exchange factor (GEF) which may activate RAB39A and/or RAB39B. Promotes the exchange of GDP to GTP, converting inactive GDP-bound Rab proteins into their active GTP-bound form. The chain is DENN domain-containing protein 5B (Dennd5b) from Mus musculus (Mouse).